Consider the following 304-residue polypeptide: ULP1-interacting protein 4 (304 aa).

The disordered stretch occupies residues aspartate 72–threonine 269. Residues glutamate 73–asparagine 83 are compositionally biased toward basic and acidic residues. The span at threonine 129–glycine 149 shows a compositional bias: polar residues. At serine 140 the chain carries Phosphoserine. Residues glutamate 155–glutamate 183 show a composition bias toward basic and acidic residues. Phosphoserine is present on residues serine 185 and serine 205.

As to quaternary structure, interacts with ULP1.

The protein resides in the endoplasmic reticulum membrane. It is found in the mitochondrion outer membrane. The protein localises to the nucleus envelope. This Saccharomyces cerevisiae (strain ATCC 204508 / S288c) (Baker's yeast) protein is ULP1-interacting protein 4 (UIP4).